A 160-amino-acid polypeptide reads, in one-letter code: Twist-related protein 2 (160 aa).

Residues 1-63 form a disordered region; it reads MEEGSSSPVS…GSPSAQSFEE (63 aa). The span at 27–37 shows a compositional bias: basic residues; it reads KRFGRKRRYSK. Positions 66–117 constitute a bHLH domain; it reads SQRILANVRERQRTQSLNEAFAALRKIIPTLPSDKLSKIQTLKLAARYIDFL.

In terms of assembly, efficient DNA binding requires dimerization with another bHLH protein. Forms a heterodimer with TCF3/E12. Also interacts with MEF2C. Expressed at low levels in sclerotome and dermatome of somites, and in limb buds at 10.5 dpc. Accumulates predominantly in dermatome, prevertebrae and derivatives of branchial arches by 13 dpc. Also expressed near surface of embryo and in chondrogenic cells. In adult, expressed at low levels in skin, bladder, uterus, aorta and heart.

It is found in the nucleus. Its subcellular location is the cytoplasm. Its function is as follows. Binds to the E-box consensus sequence 5'-CANNTG-3' as a heterodimer and inhibits transcriptional activation by MYOD1, MYOG, MEF2A and MEF2C. Also represses expression of pro-inflammatory cytokines such as TNFA and IL1B. Involved in postnatal glycogen storage and energy metabolism. Inhibits the premature or ectopic differentiation of preosteoblast cells during osteogenesis, possibly by changing the internal signal transduction response of osteoblasts to external growth factors. This chain is Twist-related protein 2 (Twist2), found in Mus musculus (Mouse).